Consider the following 362-residue polypeptide: Ferrochelatase (362 aa).

The Fe cation site is built by H228 and E309.

This sequence belongs to the ferrochelatase family.

The protein resides in the cytoplasm. It catalyses the reaction heme b + 2 H(+) = protoporphyrin IX + Fe(2+). Its pathway is porphyrin-containing compound metabolism; protoheme biosynthesis; protoheme from protoporphyrin-IX: step 1/1. Functionally, catalyzes the ferrous insertion into protoporphyrin IX. The chain is Ferrochelatase from Bordetella bronchiseptica (strain ATCC BAA-588 / NCTC 13252 / RB50) (Alcaligenes bronchisepticus).